The following is a 931-amino-acid chain: Isoleucine--tRNA ligase (931 aa).

Residues 57–67 (PYANGNIHIGH) carry the 'HIGH' region motif. Glutamate 555 serves as a coordination point for L-isoleucyl-5'-AMP. The short motif at 596-600 (KMSKS) is the 'KMSKS' region element. Lysine 599 serves as a coordination point for ATP. The Zn(2+) site is built by cysteine 890, cysteine 893, cysteine 910, and cysteine 913.

Belongs to the class-I aminoacyl-tRNA synthetase family. IleS type 1 subfamily. As to quaternary structure, monomer. Zn(2+) is required as a cofactor.

The protein localises to the cytoplasm. It catalyses the reaction tRNA(Ile) + L-isoleucine + ATP = L-isoleucyl-tRNA(Ile) + AMP + diphosphate. Catalyzes the attachment of isoleucine to tRNA(Ile). As IleRS can inadvertently accommodate and process structurally similar amino acids such as valine, to avoid such errors it has two additional distinct tRNA(Ile)-dependent editing activities. One activity is designated as 'pretransfer' editing and involves the hydrolysis of activated Val-AMP. The other activity is designated 'posttransfer' editing and involves deacylation of mischarged Val-tRNA(Ile). The protein is Isoleucine--tRNA ligase of Limosilactobacillus reuteri subsp. reuteri (strain JCM 1112) (Lactobacillus reuteri).